The primary structure comprises 108 residues: Putative transmembrane protein ORF108 (108 aa).

The next 3 membrane-spanning stretches (helical) occupy residues 11 to 31, 33 to 53, and 69 to 89; these read FIMG…SSII, IAMT…TVHF, and VGFL…LLII.

It is found in the host membrane. The chain is Putative transmembrane protein ORF108 from Acidianus hospitalis (AFV-1).